The chain runs to 208 residues: Thymidylate kinase (208 aa).

10–17 (GLEGAGKS) provides a ligand contact to ATP.

The protein belongs to the thymidylate kinase family.

It carries out the reaction dTMP + ATP = dTDP + ADP. Functionally, phosphorylation of dTMP to form dTDP in both de novo and salvage pathways of dTTP synthesis. This is Thymidylate kinase from Glaesserella parasuis serovar 5 (strain SH0165) (Haemophilus parasuis).